The primary structure comprises 461 residues: Glucan endo-1,3-beta-glucosidase (461 aa).

A signal peptide spans 1–23 (MPLLILLMLLAAGAAGAESATPS). E123 functions as the Proton donor in the catalytic mechanism. E265 (nucleophile) is an active-site residue. The tract at residues 350–375 (GASVAPTPSPNPSPNPSPKPAPSGGG) is disordered. Pro residues predominate over residues 356–370 (TPSPNPSPNPSPKPA). C378 and C439 are oxidised to a cystine.

Belongs to the glycosyl hydrolase 17 family. In terms of processing, contains two additional disulfide bonds.

It catalyses the reaction Hydrolysis of (1-&gt;3)-beta-D-glucosidic linkages in (1-&gt;3)-beta-D-glucans.. Its function is as follows. Is thought to be an important plant defense-related product against fungal pathogens. In Triticum aestivum (Wheat), this protein is Glucan endo-1,3-beta-glucosidase (GLC1).